The chain runs to 247 residues: MIIFPAVDIKDGQCVRLRQGVADAVTVFSPDPEAMARHWEGLGAKWLHLIDLDGAFSGKPRNFDLIARICSGLSIPVQLGGGVRDAATAAAYLEAGVKRLIIGTLALADPDAFAAICAAHPGRVGVSLDAVDGNLKVKGWVEDSGRTVEDVLPGLSAAGAAFVVYTDISRDGMQSGVNLPALQRLLELTDLPVIAAGGVATLDDVKALYPYGKKGLEGLISGRAIYEGTLDFPAALAYIAEKAKEDA.

The active-site Proton acceptor is the D8. D129 serves as the catalytic Proton donor.

The protein belongs to the HisA/HisF family.

The protein resides in the cytoplasm. The enzyme catalyses 1-(5-phospho-beta-D-ribosyl)-5-[(5-phospho-beta-D-ribosylamino)methylideneamino]imidazole-4-carboxamide = 5-[(5-phospho-1-deoxy-D-ribulos-1-ylimino)methylamino]-1-(5-phospho-beta-D-ribosyl)imidazole-4-carboxamide. It functions in the pathway amino-acid biosynthesis; L-histidine biosynthesis; L-histidine from 5-phospho-alpha-D-ribose 1-diphosphate: step 4/9. The protein is 1-(5-phosphoribosyl)-5-[(5-phosphoribosylamino)methylideneamino] imidazole-4-carboxamide isomerase of Solidesulfovibrio magneticus (strain ATCC 700980 / DSM 13731 / RS-1) (Desulfovibrio magneticus).